Reading from the N-terminus, the 227-residue chain is MARGIFITATGTDIGKTYVTALIIKRLRETNINCGYYKAALSGAERRDGKLIAGDANYVYNIANIKGDPNDAVSYIFQQAVSPHLAAKLNNVEISMERIKKDFYSIKNKYDYITVEGSGGIVCPISTGKERIMLHNIIKIFKLPAIVVADAGLGTINSTILTLQYMKEKNISVKMILLNNYNHKDIIHIENKGYLSDNLLIPVYTCNKNANNLEIPVEKLIEIYEEI.

13-18 (DIGKTY) contributes to the ATP binding site. Threonine 17 contributes to the Mg(2+) binding site. Residue lysine 38 is part of the active site. Serine 42 lines the substrate pocket. Residues aspartate 55, 116–119 (EGSG), and 179–180 (NN) contribute to the ATP site. Aspartate 55 and glutamate 116 together coordinate Mg(2+).

It belongs to the dethiobiotin synthetase family. As to quaternary structure, homodimer. Mg(2+) serves as cofactor.

Its subcellular location is the cytoplasm. It carries out the reaction (7R,8S)-7,8-diammoniononanoate + CO2 + ATP = (4R,5S)-dethiobiotin + ADP + phosphate + 3 H(+). The protein operates within cofactor biosynthesis; biotin biosynthesis; biotin from 7,8-diaminononanoate: step 1/2. Functionally, catalyzes a mechanistically unusual reaction, the ATP-dependent insertion of CO2 between the N7 and N8 nitrogen atoms of 7,8-diaminopelargonic acid (DAPA, also called 7,8-diammoniononanoate) to form a ureido ring. In Clostridium botulinum (strain ATCC 19397 / Type A), this protein is ATP-dependent dethiobiotin synthetase BioD.